Here is a 327-residue protein sequence, read N- to C-terminus: Phenylalanine--tRNA ligase alpha subunit (327 aa).

A Mg(2+)-binding site is contributed by E252.

This sequence belongs to the class-II aminoacyl-tRNA synthetase family. Phe-tRNA synthetase alpha subunit type 1 subfamily. Tetramer of two alpha and two beta subunits. Mg(2+) is required as a cofactor.

It localises to the cytoplasm. The catalysed reaction is tRNA(Phe) + L-phenylalanine + ATP = L-phenylalanyl-tRNA(Phe) + AMP + diphosphate + H(+). This is Phenylalanine--tRNA ligase alpha subunit from Vibrio parahaemolyticus serotype O3:K6 (strain RIMD 2210633).